A 128-amino-acid polypeptide reads, in one-letter code: Holo-[acyl-carrier-protein] synthase (128 aa).

Mg(2+) contacts are provided by Asp8 and Glu60.

Belongs to the P-Pant transferase superfamily. AcpS family. It depends on Mg(2+) as a cofactor.

Its subcellular location is the cytoplasm. It catalyses the reaction apo-[ACP] + CoA = holo-[ACP] + adenosine 3',5'-bisphosphate + H(+). Its function is as follows. Transfers the 4'-phosphopantetheine moiety from coenzyme A to a Ser of acyl-carrier-protein. The polypeptide is Holo-[acyl-carrier-protein] synthase (Anaeromyxobacter dehalogenans (strain 2CP-C)).